Here is a 143-residue protein sequence, read N- to C-terminus: MTLERTFSIVKPNAVAKNAIGAIYARFESAGLKIVAAKMVHLTREQAEGFYAEHRERPFFDGLVTFMTSGPIMVQVLEGNDAVRRNREIMGATNPESALAGTLRADYADSLTENAVHGSDSPASAEREIAYFFSADDICPRTR.

ATP contacts are provided by K11, F59, R87, T93, R104, and N114. H117 acts as the Pros-phosphohistidine intermediate in catalysis.

Belongs to the NDK family. In terms of assembly, homotetramer. Mg(2+) is required as a cofactor.

It is found in the cytoplasm. The enzyme catalyses a 2'-deoxyribonucleoside 5'-diphosphate + ATP = a 2'-deoxyribonucleoside 5'-triphosphate + ADP. The catalysed reaction is a ribonucleoside 5'-diphosphate + ATP = a ribonucleoside 5'-triphosphate + ADP. Functionally, major role in the synthesis of nucleoside triphosphates other than ATP. The ATP gamma phosphate is transferred to the NDP beta phosphate via a ping-pong mechanism, using a phosphorylated active-site intermediate. This Edwardsiella ictaluri (strain 93-146) protein is Nucleoside diphosphate kinase.